The primary structure comprises 193 residues: Phosphoheptose isomerase (193 aa).

Residues 37 to 193 (LADSFKVGGK…QLIEKEMVKA (157 aa)) form the SIS domain. 52–54 (NGG) lines the substrate pocket. 2 residues coordinate Zn(2+): H61 and E65. Substrate contacts are provided by residues E65, 93–94 (ND), 119–121 (STS), S124, and Q172. The Zn(2+) site is built by Q172 and H180.

Belongs to the SIS family. GmhA subfamily. In terms of assembly, homotetramer. Requires Zn(2+) as cofactor.

It is found in the cytoplasm. The enzyme catalyses 2 D-sedoheptulose 7-phosphate = D-glycero-alpha-D-manno-heptose 7-phosphate + D-glycero-beta-D-manno-heptose 7-phosphate. The protein operates within carbohydrate biosynthesis; D-glycero-D-manno-heptose 7-phosphate biosynthesis; D-glycero-alpha-D-manno-heptose 7-phosphate and D-glycero-beta-D-manno-heptose 7-phosphate from sedoheptulose 7-phosphate: step 1/1. It participates in bacterial outer membrane biogenesis; LPS core biosynthesis. Its function is as follows. Catalyzes the isomerization of sedoheptulose 7-phosphate in D-glycero-D-manno-heptose 7-phosphate. The protein is Phosphoheptose isomerase of Photorhabdus laumondii subsp. laumondii (strain DSM 15139 / CIP 105565 / TT01) (Photorhabdus luminescens subsp. laumondii).